Here is a 702-residue protein sequence, read N- to C-terminus: uncharacterized protein (702 aa).

Composition is skewed to low complexity over residues 306–384 (NNNN…NNNN), 488–511 (PTKT…TNIT), 559–590 (QQSQ…NNNN), 603–612 (SNQNSNNNNQ), and 621–639 (NNNN…NNNN). 3 disordered regions span residues 306 to 385 (NNNN…NNNE), 488 to 513 (PTKT…ITYG), and 551 to 645 (STMN…NSRY). The region spanning 337–489 (NNINNNINNN…IKSLDILSPT (153 aa)) is the VPS9 domain.

This is an uncharacterized protein from Dictyostelium discoideum (Social amoeba).